The primary structure comprises 101 residues: Small ribosomal subunit protein uS14 (101 aa).

The protein belongs to the universal ribosomal protein uS14 family. As to quaternary structure, part of the 30S ribosomal subunit. Contacts proteins S3 and S10.

In terms of biological role, binds 16S rRNA, required for the assembly of 30S particles and may also be responsible for determining the conformation of the 16S rRNA at the A site. The protein is Small ribosomal subunit protein uS14 of Shewanella frigidimarina (strain NCIMB 400).